The chain runs to 96 residues: UPF0213 protein BCE_0033 (96 aa).

In terms of domain architecture, GIY-YIG spans 4–79; sequence NKHCFYVVEC…KQLNRKQKEE (76 aa).

Belongs to the UPF0213 family.

The polypeptide is UPF0213 protein BCE_0033 (Bacillus cereus (strain ATCC 10987 / NRS 248)).